A 113-amino-acid chain; its full sequence is Large ribosomal subunit protein uL22 (113 aa).

Belongs to the universal ribosomal protein uL22 family. In terms of assembly, part of the 50S ribosomal subunit.

This protein binds specifically to 23S rRNA; its binding is stimulated by other ribosomal proteins, e.g. L4, L17, and L20. It is important during the early stages of 50S assembly. It makes multiple contacts with different domains of the 23S rRNA in the assembled 50S subunit and ribosome. Its function is as follows. The globular domain of the protein is located near the polypeptide exit tunnel on the outside of the subunit, while an extended beta-hairpin is found that lines the wall of the exit tunnel in the center of the 70S ribosome. The polypeptide is Large ribosomal subunit protein uL22 (Stenotrophomonas maltophilia (strain K279a)).